A 293-amino-acid chain; its full sequence is Ribosomal protein L11 methyltransferase (293 aa).

The S-adenosyl-L-methionine site is built by T145, G166, D188, and N230.

The protein belongs to the methyltransferase superfamily. PrmA family.

The protein resides in the cytoplasm. It carries out the reaction L-lysyl-[protein] + 3 S-adenosyl-L-methionine = N(6),N(6),N(6)-trimethyl-L-lysyl-[protein] + 3 S-adenosyl-L-homocysteine + 3 H(+). Its function is as follows. Methylates ribosomal protein L11. The sequence is that of Ribosomal protein L11 methyltransferase from Mannheimia succiniciproducens (strain KCTC 0769BP / MBEL55E).